A 312-amino-acid polypeptide reads, in one-letter code: Olfactory receptor 6B2 (312 aa).

Topologically, residues 1–25 (MSGENVTKVSTFILVGLPTAPGLQY) are extracellular. N-linked (GlcNAc...) asparagine glycosylation occurs at asparagine 5. A helical transmembrane segment spans residues 26–46 (LLFLLFLLTYLFVLVENLAII). At 47–54 (LIVWSSTS) the chain is on the cytoplasmic side. Residues 55 to 75 (LHRPMYYFLSSMSFLEIWYVS) form a helical membrane-spanning segment. Over 76 to 99 (DITPKMLEGFLLQQKRISFVGCMT) the chain is Extracellular. Cysteine 97 and cysteine 189 form a disulfide bridge. Residues 100 to 120 (QLYFFSSLVCTECVLLASMAY) traverse the membrane as a helical segment. Residues 121–139 (DRYVAICHPLRYHVLVTPG) are Cytoplasmic-facing. Residues 140–160 (LCLQLVGFSFVSGFTISMIKV) form a helical membrane-spanning segment. The Extracellular segment spans residues 161 to 196 (CFISSVTFCGSNVLNHFFCDISPILKLACTDFSTAE). A helical transmembrane segment spans residues 197-217 (LVDFILAFIILVFPLLATILS). The Cytoplasmic portion of the chain corresponds to 218–237 (YWHITLAVLRIPSATGCWRA). A helical transmembrane segment spans residues 238 to 258 (FSTCASHLTVVTVFYTALLFM). Over 259–271 (YVRPQAIDSQSSN) the chain is Extracellular. A helical membrane pass occupies residues 272 to 292 (KLISAVYTVVTPIINPLIYCL). Residues 293–312 (RNKEFKDALKKALGLGQTSH) lie on the Cytoplasmic side of the membrane.

Belongs to the G-protein coupled receptor 1 family.

The protein resides in the cell membrane. Odorant receptor. This is Olfactory receptor 6B2 (OR6B2) from Homo sapiens (Human).